Consider the following 161-residue polypeptide: Nucleotide-binding protein Plav_2177 (161 aa).

Belongs to the YajQ family.

Its function is as follows. Nucleotide-binding protein. In Parvibaculum lavamentivorans (strain DS-1 / DSM 13023 / NCIMB 13966), this protein is Nucleotide-binding protein Plav_2177.